The following is a 100-amino-acid chain: Large ribosomal subunit protein bL28 (100 aa).

This sequence belongs to the bacterial ribosomal protein bL28 family.

In Ehrlichia chaffeensis (strain ATCC CRL-10679 / Arkansas), this protein is Large ribosomal subunit protein bL28.